We begin with the raw amino-acid sequence, 165 residues long: Large ribosomal subunit protein uL10 (165 aa).

Belongs to the universal ribosomal protein uL10 family. In terms of assembly, part of the ribosomal stalk of the 50S ribosomal subunit. The N-terminus interacts with L11 and the large rRNA to form the base of the stalk. The C-terminus forms an elongated spine to which L12 dimers bind in a sequential fashion forming a multimeric L10(L12)X complex.

Forms part of the ribosomal stalk, playing a central role in the interaction of the ribosome with GTP-bound translation factors. The sequence is that of Large ribosomal subunit protein uL10 from Burkholderia lata (strain ATCC 17760 / DSM 23089 / LMG 22485 / NCIMB 9086 / R18194 / 383).